Consider the following 425-residue polypeptide: Perilipin-2 (425 aa).

Alanine 2 is subject to N-acetylalanine. At serine 213 the chain carries Phosphoserine. Tyrosine 230 is subject to Phosphotyrosine.

This sequence belongs to the perilipin family. In terms of assembly, interacts with IRGC. In terms of processing, acylated; primarily with C14, C16 and C18 fatty acids. Phosphorylation at Tyr-230 by isoform 1 of CHKA (CHKalpha2) promotes dissociation from lipid droplets: dissociation is followed by recruitment of autophagosome machinery to lipid droplets and subsequent lipid droplet lipolysis. Post-translationally, polyubiquitination of Nt-acetylatable A-PLIN2 by MARCHF6 lead to degradation by 26S proteasomes. As to expression, adipose tissue specific. Expressed abundantly and preferentially in fat pads.

It localises to the membrane. Its subcellular location is the lipid droplet. Structural component of lipid droplets, which is required for the formation and maintenance of lipid storage droplets. This chain is Perilipin-2, found in Mus musculus (Mouse).